A 475-amino-acid chain; its full sequence is Lipoprotein lipase (475 aa).

Positions 1 to 27 (MESKALLVLTLAVWLQSLTASRGGVAA) are cleaved as a signal peptide. The tract at residues 32–53 (RDFIDIESKFALRTPEDTAEDT) is interaction with GPIHBP1. The cysteines at positions 54 and 67 are disulfide-linked. An N-linked (GlcNAc...) asparagine glycan is attached at asparagine 70. Tyrosine 121 is modified (3'-nitrotyrosine). Residue serine 159 is the Nucleophile of the active site. Aspartate 183 (charge relay system) is an active-site residue. The residue at position 191 (tyrosine 191) is a 3'-nitrotyrosine. Positions 194, 197, 199, and 202 each coordinate Ca(2+). Cysteines 243 and 266 form a disulfide. The essential for determining substrate specificity stretch occupies residues 243-266 (CNIGEAIRVIAERGLGDVDQLVKC). Catalysis depends on histidine 268, which acts as the Charge relay system. Disulfide bonds link cysteine 291/cysteine 310 and cysteine 302/cysteine 305. Residues 341 to 464 (FHYQVKIHFS…KGKAPAVFVK (124 aa)) form the PLAT domain. Tyrosine 343 carries the post-translational modification 3'-nitrotyrosine. Asparagine 386 carries an N-linked (GlcNAc...) asparagine glycan. Residues 417–421 (WSDWW) are important for interaction with lipoprotein particles. Residues 430–434 (KIRVK) are important for heparin binding. The interval 443-467 (IFCSREKVSHLQKGKAPAVFVKCHD) is interaction with GPIHBP1. Cysteine 445 and cysteine 465 are oxidised to a cystine.

It belongs to the AB hydrolase superfamily. Lipase family. In terms of assembly, homodimer. Interacts with GPIHBP1 with 1:1 stoichiometry. Interacts with APOC2; the interaction activates LPL activity in the presence of lipids. Interaction with heparan sulfate proteoglycans is required to protect LPL against loss of activity. Associates with lipoprotein particles in blood plasma. Interacts with LMF1 and SEL1L; interaction with SEL1L is required to prevent aggregation of newly synthesized LPL in the endoplasmic reticulum (ER), and for normal export of LPL from the ER to the extracellular space. Interacts with SORL1; SORL1 acts as a sorting receptor, promoting LPL localization to endosomes and later to lysosomes, leading to degradation of newly synthesized LPL. Tyrosine nitration after lipopolysaccharide (LPS) challenge down-regulates the lipase activity. Detected in blood plasma. Detected in milk (at protein level).

It is found in the cell membrane. The protein resides in the secreted. Its subcellular location is the extracellular space. The protein localises to the extracellular matrix. It carries out the reaction a triacylglycerol + H2O = a diacylglycerol + a fatty acid + H(+). It catalyses the reaction a 1,2-diacyl-sn-glycero-3-phosphocholine + H2O = a 2-acyl-sn-glycero-3-phosphocholine + a fatty acid + H(+). The enzyme catalyses 1,2,3-tri-(9Z-octadecenoyl)-glycerol + H2O = di-(9Z)-octadecenoylglycerol + (9Z)-octadecenoate + H(+). The catalysed reaction is 1,2-di-(9Z-octadecenoyl)-sn-glycero-3-phosphocholine + H2O = (9Z-octadecenoyl)-sn-glycero-3-phosphocholine + (9Z)-octadecenoate + H(+). It carries out the reaction 1,2,3-tributanoylglycerol + H2O = dibutanoylglycerol + butanoate + H(+). It catalyses the reaction 1,2-dihexadecanoyl-sn-glycero-3-phosphocholine + H2O = hexadecanoyl-sn-glycero-3-phosphocholine + hexadecanoate + H(+). The apolipoprotein APOC2 acts as a coactivator of LPL activity. Ca(2+) binding promotes protein stability and formation of the active homodimer. Interaction with GPIHBP1 protects LPL against inactivation by ANGPTL4. Inhibited by NaCl. Key enzyme in triglyceride metabolism. Catalyzes the hydrolysis of triglycerides from circulating chylomicrons and very low density lipoproteins (VLDL), and thereby plays an important role in lipid clearance from the blood stream, lipid utilization and storage. Although it has both phospholipase and triglyceride lipase activities it is primarily a triglyceride lipase with low but detectable phospholipase activity. Mediates margination of triglyceride-rich lipoprotein particles in capillaries. Recruited to its site of action on the luminal surface of vascular endothelium by binding to GPIHBP1 and cell surface heparan sulfate proteoglycans. The protein is Lipoprotein lipase (LPL) of Homo sapiens (Human).